Here is a 254-residue protein sequence, read N- to C-terminus: Type III pantothenate kinase (254 aa).

ATP is bound at residue 6–13 (DVGNSNIV). Residues Tyr-100 and 107 to 110 (GADR) contribute to the substrate site. Asp-109 (proton acceptor) is an active-site residue. Residue Asp-129 coordinates K(+). Position 132 (Thr-132) interacts with ATP. A substrate-binding site is contributed by Thr-184.

It belongs to the type III pantothenate kinase family. Homodimer. It depends on NH4(+) as a cofactor. K(+) serves as cofactor.

Its subcellular location is the cytoplasm. It catalyses the reaction (R)-pantothenate + ATP = (R)-4'-phosphopantothenate + ADP + H(+). The protein operates within cofactor biosynthesis; coenzyme A biosynthesis; CoA from (R)-pantothenate: step 1/5. Its function is as follows. Catalyzes the phosphorylation of pantothenate (Pan), the first step in CoA biosynthesis. In Pelobacter propionicus (strain DSM 2379 / NBRC 103807 / OttBd1), this protein is Type III pantothenate kinase.